Here is a 657-residue protein sequence, read N- to C-terminus: Protein kinase and PP2C-like domain-containing protein (657 aa).

The 296-residue stretch at 32–327 (FSLLSPIAKG…LKIIEKHIAV (296 aa)) folds into the Protein kinase domain. Residues 38–46 (IAKGSESTV) and lysine 59 contribute to the ATP site. The active-site Proton acceptor; for kinase activity is aspartate 156. One can recognise a PPM-type phosphatase domain in the interval 390 to 647 (SWGSFATCGR…DNITVIVVFL (258 aa)). Aspartate 426, glycine 427, aspartate 598, and aspartate 638 together coordinate Mn(2+).

The protein in the N-terminal section; belongs to the protein kinase superfamily. Ser/Thr protein kinase family. This sequence in the C-terminal section; belongs to the PP2C family. It depends on Mg(2+) as a cofactor. The cofactor is Mn(2+).

The enzyme catalyses L-seryl-[protein] + ATP = O-phospho-L-seryl-[protein] + ADP + H(+). It catalyses the reaction L-threonyl-[protein] + ATP = O-phospho-L-threonyl-[protein] + ADP + H(+). It carries out the reaction O-phospho-L-seryl-[protein] + H2O = L-seryl-[protein] + phosphate. The catalysed reaction is O-phospho-L-threonyl-[protein] + H2O = L-threonyl-[protein] + phosphate. In Oryza sativa subsp. japonica (Rice), this protein is Protein kinase and PP2C-like domain-containing protein.